The following is a 241-amino-acid chain: Ribose-5-phosphate isomerase A (241 aa).

Substrate-binding positions include 29–32 (TGTT), 84–87 (DGAD), and 97–100 (KGGG). Glu106 functions as the Proton acceptor in the catalytic mechanism. A substrate-binding site is contributed by Lys124.

It belongs to the ribose 5-phosphate isomerase family. As to quaternary structure, homodimer.

It catalyses the reaction aldehydo-D-ribose 5-phosphate = D-ribulose 5-phosphate. Its pathway is carbohydrate degradation; pentose phosphate pathway; D-ribose 5-phosphate from D-ribulose 5-phosphate (non-oxidative stage): step 1/1. Its function is as follows. Catalyzes the reversible conversion of ribose-5-phosphate to ribulose 5-phosphate. The polypeptide is Ribose-5-phosphate isomerase A (Thermoplasma acidophilum (strain ATCC 25905 / DSM 1728 / JCM 9062 / NBRC 15155 / AMRC-C165)).